A 409-amino-acid polypeptide reads, in one-letter code: MASGKATGKTDAPAPVIKLGGPKPPKVGSSGNASWFQAIKAKKLNSPPLKFEGSGVPDNENLKTSQQHGYWRRQARFKPSKGGRKPVPDAWYFYYTGTGPAADLNWGDSQDGIVWVAAKGADTKSRSNQGTRDPDKFDQYPLRFSDGGPDGNFRWDFIPLNRGRSGKSTAASSAASSRAPSREGSRGRRSGAEDDLIARAAKIIQDQQKKGARITKAKADEMAHRRYCKRTIPPGYKVDQVFGPRTKGKEGNFGDDKMNEEGIKDGRVTAMLNLVPSSHACLFGSRVTPKLQPDGLHLKFEFTTVVSRNDPQFDNYVKICDQCVDGVGTRPKDDEPKPKSRSSSRPATRTSSPAPRQPRPKKEKKTKKQDDEVDKALTSDEERNNAQLEFDDEPKVINWGDSALGENEL.

4 disordered regions span residues 1–32, 46–69, 120–193, and 238–259; these read MASGKATGKTDAPAPVIKLGGPKPPKVGSSGN, SPPLKFEGSGVPDNENLKTSQQHG, GADT…SGAE, and VDQVFGPRTKGKEGNFGDDKMN. Over residues 15 to 31 the composition is skewed to low complexity; the sequence is PVIKLGGPKPPKVGSSG. The RNA-binding stretch occupies residues 29–160; it reads SSGNASWFQA…GNFRWDFIPL (132 aa). The region spanning 31-156 is the CoV N NTD domain; sequence GNASWFQAIK…GGPDGNFRWD (126 aa). The span at 162-179 shows a compositional bias: low complexity; the sequence is RGRSGKSTAASSAASSRA. Basic and acidic residues-rich tracts occupy residues 180–192 and 247–259; these read PSREGSRGRRSGA and KGKEGNFGDDKMN. Ser-190 bears the Phosphoserine; by host mark. Residues 215–331 enclose the CoV N CTD domain; sequence TKAKADEMAH…QCVDGVGTRP (117 aa). The segment at 226 to 333 is dimerization; that stretch reads RYCKRTIPPG…VDGVGTRPKD (108 aa). Residues Cys-320 and Cys-323 are joined by a disulfide bond. Positions 327–409 are disordered; it reads VGTRPKDDEP…GDSALGENEL (83 aa). Positions 341-354 are enriched in low complexity; the sequence is RSSSRPATRTSSPA. The segment covering 358–367 has biased composition (basic residues); sequence PRPKKEKKTK. Basic and acidic residues predominate over residues 368–384; sequence KQDDEVDKALTSDEERN. Thr-378 carries the phosphothreonine; by host modification. Phosphoserine; by host is present on Ser-379.

This sequence belongs to the gammacoronavirus nucleocapsid protein family. As to quaternary structure, homooligomer. Both monomeric and oligomeric forms interact with RNA. Interacts with protein M. Interacts with NSP3; this interaction serves to tether the genome to the newly translated replicase-transcriptase complex at a very early stage of infection. In terms of processing, ADP-ribosylated. The ADP-ribosylation is retained in the virion during infection. Post-translationally, phosphorylated on serine and threonine residues.

It localises to the virion. The protein resides in the host endoplasmic reticulum-Golgi intermediate compartment. The protein localises to the host Golgi apparatus. Its function is as follows. Packages the positive strand viral genome RNA into a helical ribonucleocapsid (RNP) and plays a fundamental role during virion assembly through its interactions with the viral genome and membrane protein M. Plays an important role in enhancing the efficiency of subgenomic viral RNA transcription as well as viral replication. This is Nucleoprotein from Gallus gallus (Chicken).